A 143-amino-acid chain; its full sequence is Large ribosomal subunit protein uL16 (143 aa).

The span at 1-14 (MLTPKRVKWRRQHR) shows a compositional bias: basic residues. A disordered region spans residues 1 to 23 (MLTPKRVKWRRQHRPDRAGKAKG).

Belongs to the universal ribosomal protein uL16 family. Part of the 50S ribosomal subunit.

Functionally, binds 23S rRNA and is also seen to make contacts with the A and possibly P site tRNAs. The sequence is that of Large ribosomal subunit protein uL16 from Desulforudis audaxviator (strain MP104C).